We begin with the raw amino-acid sequence, 906 residues long: Protein translocase subunit SecA (906 aa).

Residues Gln89, 107-111, and Asp501 each bind ATP; that span reads GEGKT. Residues Cys891, Cys893, Cys902, and His903 each coordinate Zn(2+).

It belongs to the SecA family. As to quaternary structure, monomer and homodimer. Part of the essential Sec protein translocation apparatus which comprises SecA, SecYEG and auxiliary proteins SecDF-YajC and YidC. Zn(2+) is required as a cofactor.

The protein resides in the cell inner membrane. The protein localises to the cytoplasm. The enzyme catalyses ATP + H2O + cellular proteinSide 1 = ADP + phosphate + cellular proteinSide 2.. Functionally, part of the Sec protein translocase complex. Interacts with the SecYEG preprotein conducting channel. Has a central role in coupling the hydrolysis of ATP to the transfer of proteins into and across the cell membrane, serving both as a receptor for the preprotein-SecB complex and as an ATP-driven molecular motor driving the stepwise translocation of polypeptide chains across the membrane. The protein is Protein translocase subunit SecA of Parvibaculum lavamentivorans (strain DS-1 / DSM 13023 / NCIMB 13966).